Reading from the N-terminus, the 381-residue chain is cAMP-dependent protein kinase type I-alpha regulatory subunit (381 aa).

An N-acetylmethionine modification is found at M1. A2 bears the N-acetylalanine; in cAMP-dependent protein kinase type I-alpha regulatory subunit, N-terminally processed mark. Residues 2-136 (ASGSMATSEE…ALAKAIEKNV (135 aa)) are dimerization and phosphorylation. A Phosphoserine modification is found at S3. The disordered stretch occupies residues 73 to 96 (IRTDSREDEISPPPPNPVVKGRRR). T75 carries the post-translational modification Phosphothreonine. Residues S77 and S83 each carry the phosphoserine modification. Positions 96 to 100 (RRGAI) match the Pseudophosphorylation motif motif. S101 is subject to Phosphoserine. Residues 137 to 254 (LFSH…SKVS), E202, R211, 255 to 381 (ILES…SLSV), E326, and R335 contribute to the 3',5'-cyclic AMP site. The residue at position 258 (S258) is a Phosphoserine.

It belongs to the cAMP-dependent kinase regulatory chain family. The inactive holoenzyme is composed of two regulatory chains and two catalytic chains. Activation by cAMP releases the two active catalytic monomers and the regulatory dimer. Interacts with PRKACA and PRKACB. PRKAR1A also interacts with RFC2; the complex may be involved in cell survival. Interacts with AKAP4. Interacts with RARA; the interaction occurs in the presence of cAMP or FSH and regulates RARA transcriptional activity. Interacts with the phosphorylated form of PJA2. Interacts with PRKX; regulates this cAMP-dependent protein kinase. Interacts with CBFA2T3. Interacts with smAKAP; this interaction may target PRKAR1A to the plasma membrane. Interacts with AICDA. Post-translationally, the pseudophosphorylation site binds to the substrate-binding region of the catalytic chain, resulting in the inhibition of its activity.

It is found in the cell membrane. Its function is as follows. Regulatory subunit of the cAMP-dependent protein kinases involved in cAMP signaling in cells. The chain is cAMP-dependent protein kinase type I-alpha regulatory subunit (Prkar1a) from Mus musculus (Mouse).